Here is a 329-residue protein sequence, read N- to C-terminus: DNA-directed RNA polymerase subunit alpha (329 aa).

Positions Met-1 to Arg-235 are alpha N-terminal domain (alpha-NTD). The interval Phe-249 to Glu-329 is alpha C-terminal domain (alpha-CTD).

The protein belongs to the RNA polymerase alpha chain family. Homodimer. The RNAP catalytic core consists of 2 alpha, 1 beta, 1 beta' and 1 omega subunit. When a sigma factor is associated with the core the holoenzyme is formed, which can initiate transcription.

It carries out the reaction RNA(n) + a ribonucleoside 5'-triphosphate = RNA(n+1) + diphosphate. Its function is as follows. DNA-dependent RNA polymerase catalyzes the transcription of DNA into RNA using the four ribonucleoside triphosphates as substrates. This Photorhabdus laumondii subsp. laumondii (strain DSM 15139 / CIP 105565 / TT01) (Photorhabdus luminescens subsp. laumondii) protein is DNA-directed RNA polymerase subunit alpha.